A 116-amino-acid polypeptide reads, in one-letter code: Ribosome-binding factor A (116 aa).

The protein belongs to the RbfA family. As to quaternary structure, monomer. Binds 30S ribosomal subunits, but not 50S ribosomal subunits or 70S ribosomes.

It is found in the cytoplasm. Its function is as follows. One of several proteins that assist in the late maturation steps of the functional core of the 30S ribosomal subunit. Associates with free 30S ribosomal subunits (but not with 30S subunits that are part of 70S ribosomes or polysomes). Required for efficient processing of 16S rRNA. May interact with the 5'-terminal helix region of 16S rRNA. This is Ribosome-binding factor A from Staphylococcus epidermidis (strain ATCC 35984 / DSM 28319 / BCRC 17069 / CCUG 31568 / BM 3577 / RP62A).